A 624-amino-acid chain; its full sequence is Laccase-1 (624 aa).

The N-terminal stretch at 1–20 (MRGLAKLFFLSCSFVSLVSS) is a signal peptide. Plastocyanin-like domains follow at residues 72–183 (FASP…HSPN) and 195–343 (DRIV…CMFG). Cu cation contacts are provided by His117 and His119. A disulfide bond links Cys138 and Cys578. The N-linked (GlcNAc...) asparagine glycan is linked to Asn149. Cu cation is bound by residues His162 and His164. Residues Asn242 and Asn430 are each glycosylated (N-linked (GlcNAc...) asparagine). In terms of domain architecture, Plastocyanin-like 3 spans 469 to 562 (IIINNLDTVI…GKLAVIVVQP (94 aa)). His480, His483, and His485 together coordinate Cu cation. N-linked (GlcNAc...) asparagine glycosylation occurs at Asn503. Cu cation is bound by residues His543, Cys544, His545, and His549. A disordered region spans residues 579–604 (ANTDPNAFGPAKRSSSPSIQSSKTSS). Over residues 592 to 604 (SSSPSIQSSKTSS) the composition is skewed to low complexity.

Belongs to the multicopper oxidase family. Cu cation serves as cofactor.

The protein localises to the secreted. Its subcellular location is the cell wall. It catalyses the reaction 4 hydroquinone + O2 = 4 benzosemiquinone + 2 H2O. Functionally, laccase that catalyzes the oxidation of certain aromatic compounds, including L-dopa, to quinones, which then polymerize to melanin. Able to oxidize a wide variety of aromatic diphenol and diamino groups in the ortho, meta, and para positions but not monophenolic groups such as in phenol, tyramine, or tyrosine. Plays an important role in virulence. Plays a role in dissemination to extrapulmonary sites but is not involved in pulmonary growth or in elicitation of cellular immune responses in the lung. The polypeptide is Laccase-1 (Cryptococcus neoformans var. neoformans serotype D (strain B-3501A) (Filobasidiella neoformans)).